The primary structure comprises 305 residues: Putative lipid kinase SAR0780 (305 aa).

Positions 3–139 (NKYTHGVLFY…YDVIKINNQY (137 aa)) constitute a DAGKc domain. ATP is bound by residues Ser44, 74 to 80 (GDGTVNE), and Thr101. The Mg(2+) site is built by Ser220, Asp223, and Glu225. The active-site Proton acceptor is Glu281.

It belongs to the diacylglycerol/lipid kinase family. Mg(2+) serves as cofactor.

May catalyze the ATP-dependent phosphorylation of lipids other than diacylglycerol (DAG). In fact, is not able to exhibit diacylglycerol kinase activity in vitro. The polypeptide is Putative lipid kinase SAR0780 (Staphylococcus aureus (strain MRSA252)).